The chain runs to 235 residues: uncharacterized protein (235 aa).

A helical membrane pass occupies residues 27–47; sequence AMKLWSTWITLLILTFFCSEC. The CX domain maps to 124 to 185; sequence YFWGESKYVP…CCGYDCCSNS (62 aa). A helical membrane pass occupies residues 187 to 207; sequence IFTSIFSLLVILLIVSVLSIF.

The protein resides in the membrane. This is an uncharacterized protein from Caenorhabditis elegans.